Here is a 666-residue protein sequence, read N- to C-terminus: Magnesium-chelatase 67 kDa subunit (666 aa).

37–44 (GRRGTGKT) contacts ATP. Residues 327–367 (LPDEEEQMQPPPPPPPPPPPPEPDKPDDPETPPDEAPKDEQ) form a disordered region. Residues 335 to 347 (QPPPPPPPPPPPP) are compositionally biased toward pro residues. A VWFA domain is found at 475–661 (LIIFVVDASG…SLAETVKSGV (187 aa)).

It belongs to the Mg-chelatase subunits D/I family.

It catalyses the reaction protoporphyrin IX + Mg(2+) + ATP + H2O = Mg-protoporphyrin IX + ADP + phosphate + 3 H(+). Its pathway is porphyrin-containing compound metabolism; bacteriochlorophyll biosynthesis. Its function is as follows. Involved in bacteriochlorophyll biosynthesis; introduces a magnesium ion into protoporphyrin IX to yield Mg-protoporphyrin IX. The polypeptide is Magnesium-chelatase 67 kDa subunit (bchD) (Heliobacterium mobile (Heliobacillus mobilis)).